Reading from the N-terminus, the 411-residue chain is Bifunctional protein GlmU (411 aa).

A pyrophosphorylase region spans residues 1–204; sequence MDAIILCAGK…NGKLHGVELK (204 aa). UTP-binding positions include 6 to 9, Gln-74, and Gly-79; that span reads LCAG. Thr-80, Gly-130, Asn-142, and Asn-158 together coordinate N-acetyl-alpha-D-glucosamine 1-phosphate. Positions 205–224 are linker; it reads GYWNDIGHPWDVLSANNHFL. The N-acetyltransferase stretch occupies residues 225–411; the sequence is NKIISKVSGK…DELVITKKRN (187 aa). The Proton acceptor role is filled by His-308. Residues Ala-384 and Lys-401 each contribute to the acetyl-CoA site.

In the N-terminal section; belongs to the N-acetylglucosamine-1-phosphate uridyltransferase family. It in the C-terminal section; belongs to the transferase hexapeptide repeat family.

It carries out the reaction N-acetyl-alpha-D-glucosamine 1-phosphate + UTP + H(+) = UDP-N-acetyl-alpha-D-glucosamine + diphosphate. It catalyses the reaction alpha-D-glucosamine 1-phosphate + acetyl-CoA = N-acetyl-alpha-D-glucosamine 1-phosphate + CoA + H(+). Its pathway is nucleotide-sugar biosynthesis; UDP-N-acetyl-alpha-D-glucosamine biosynthesis; N-acetyl-alpha-D-glucosamine 1-phosphate from alpha-D-glucosamine 6-phosphate (route II): step 2/2. The protein operates within nucleotide-sugar biosynthesis; UDP-N-acetyl-alpha-D-glucosamine biosynthesis; UDP-N-acetyl-alpha-D-glucosamine from N-acetyl-alpha-D-glucosamine 1-phosphate: step 1/1. Functionally, catalyzes the last two sequential reactions in the de novo biosynthetic pathway for UDP-N-acetyl-glucosamine (UDP-GlcNAc). Responsible for the acetylation of GlcN-1-P to GlcNAc-1-P, and for the uridyl transfer from UTP to GlcNAc-1-P, to produce UDP-GlcNAc and pyrophosphate. The protein is Bifunctional protein GlmU of Methanococcus maripaludis (strain DSM 14266 / JCM 13030 / NBRC 101832 / S2 / LL).